Consider the following 261-residue polypeptide: Probable septum site-determining protein MinC (261 aa).

Belongs to the MinC family. As to quaternary structure, interacts with MinD and FtsZ.

In terms of biological role, cell division inhibitor that blocks the formation of polar Z ring septums. Rapidly oscillates between the poles of the cell to destabilize FtsZ filaments that have formed before they mature into polar Z rings. Prevents FtsZ polymerization. This chain is Probable septum site-determining protein MinC, found in Burkholderia cenocepacia (strain ATCC BAA-245 / DSM 16553 / LMG 16656 / NCTC 13227 / J2315 / CF5610) (Burkholderia cepacia (strain J2315)).